The primary structure comprises 279 residues: Very long chain fatty acid elongase 1 (279 aa).

Met-1 carries the post-translational modification N-acetylmethionine. The next 7 membrane-spanning stretches (helical) occupy residues 23 to 43, 61 to 81, 110 to 130, 137 to 154, 176 to 196, 201 to 221, and 231 to 251; these read PLMGSPLLMTSILLTYVYFVL, FMIVYNFSLVALSLYIVYEFL, VAWLFLFSKFIELMDTVIFIL, VTFLHVFHHSVLPWSWWW, VIMYLYYGLSAFGPVAQPYLW, MTAIQLIQFVLVSLHISQYYF, and VIIHLIWMYGTIFFMLFSNFW. A Di-lysine motif motif is present at residues 275-279; the sequence is KVKAN.

It belongs to the ELO family. ELOVL1 subfamily. Interacts with LASS2 and HSD17B12. Interacts with TECR. In terms of tissue distribution, ubiquitous.

It is found in the endoplasmic reticulum membrane. It catalyses the reaction a very-long-chain acyl-CoA + malonyl-CoA + H(+) = a very-long-chain 3-oxoacyl-CoA + CO2 + CoA. The catalysed reaction is eicosanoyl-CoA + malonyl-CoA + H(+) = 3-oxodocosanoyl-CoA + CO2 + CoA. The enzyme catalyses (11Z)-eicosenoyl-CoA + malonyl-CoA + H(+) = 3-oxo-(13Z)-docosenoyl-CoA + CO2 + CoA. It carries out the reaction docosanoyl-CoA + malonyl-CoA + H(+) = 3-oxotetracosanoyl-CoA + CO2 + CoA. It catalyses the reaction (13Z)-docosenoyl-CoA + malonyl-CoA + H(+) = 3-oxo-(15Z)-tetracosenoyl-CoA + CO2 + CoA. The catalysed reaction is tetracosanoyl-CoA + malonyl-CoA + H(+) = 3-oxohexacosanoyl-CoA + CO2 + CoA. The enzyme catalyses hexacosanoyl-CoA + malonyl-CoA + H(+) = 3-oxooctacosanyol-CoA + CO2 + CoA. It carries out the reaction octadecanoyl-CoA + malonyl-CoA + H(+) = 3-oxoeicosanoyl-CoA + CO2 + CoA. It functions in the pathway lipid metabolism; fatty acid biosynthesis. In terms of biological role, catalyzes the first and rate-limiting reaction of the four reactions that constitute the long-chain fatty acids elongation cycle. This endoplasmic reticulum-bound enzymatic process allows the addition of 2 carbons to the chain of long- and very long-chain fatty acids (VLCFAs) per cycle. Condensing enzyme that exhibits activity toward saturated and monounsaturated acyl-CoA substrates, with the highest activity towards C22:0 acyl-CoA. May participate in the production of both saturated and monounsaturated VLCFAs of different chain lengths that are involved in multiple biological processes as precursors of membrane lipids and lipid mediators. Important for saturated C24:0 and monounsaturated C24:1 sphingolipid synthesis. Indirectly inhibits RPE65 via production of VLCFAs. This chain is Very long chain fatty acid elongase 1, found in Homo sapiens (Human).